We begin with the raw amino-acid sequence, 270 residues long: Glucosamine-6-phosphate deaminase (270 aa).

Catalysis depends on Asp-72, which acts as the Proton acceptor; for enolization step. The active-site For ring-opening step is the Asp-141. Catalysis depends on His-143, which acts as the Proton acceptor; for ring-opening step. Glu-148 serves as the catalytic For ring-opening step.

The protein belongs to the glucosamine/galactosamine-6-phosphate isomerase family. NagB subfamily. As to quaternary structure, homohexamer.

The catalysed reaction is alpha-D-glucosamine 6-phosphate + H2O = beta-D-fructose 6-phosphate + NH4(+). The protein operates within amino-sugar metabolism; N-acetylneuraminate degradation; D-fructose 6-phosphate from N-acetylneuraminate: step 5/5. With respect to regulation, allosterically activated by N-acetylglucosamine 6-phosphate (GlcNAc6P). Its function is as follows. Catalyzes the reversible isomerization-deamination of glucosamine 6-phosphate (GlcN6P) to form fructose 6-phosphate (Fru6P) and ammonium ion. The chain is Glucosamine-6-phosphate deaminase from Photorhabdus laumondii subsp. laumondii (strain DSM 15139 / CIP 105565 / TT01) (Photorhabdus luminescens subsp. laumondii).